A 720-amino-acid polypeptide reads, in one-letter code: Engulfment and cell motility protein 2 (720 aa).

Position 48 is a phosphotyrosine (Tyr-48). In terms of domain architecture, ELMO spans 311-485; the sequence is AQRDIIFELR…VVREQITRAL (175 aa). Ser-503 is subject to Phosphoserine. A PH domain is found at 553–674; it reads SSFRKIGNRR…LLGKDMSSEL (122 aa). Positions 700-707 match the SH3-binding motif; the sequence is PEAPPPIP. Tyr-717 carries the phosphotyrosine modification.

As to quaternary structure, interacts with the SH3-domain of DOCK1 via its SH3-binding site. Probably part of a complex with DOCK1 and RAC1. Probably part of a complex with DOCK1 and CRK isoform CRK-II. Interacts with ARHGEF16, DOCK4 and EPHA2; mediates activation of RAC1 by EPHA2. Interacts with ADGRB3. Interacts with AUTS2; the interaction is direct. As to expression, widely expressed, with a higher expression in skeletal muscle, kidney and placenta.

It localises to the cytoplasm. Its subcellular location is the cytosol. It is found in the membrane. Involved in cytoskeletal rearrangements required for phagocytosis of apoptotic cells and cell motility. Acts in association with DOCK1 and CRK. Was initially proposed to be required in complex with DOCK1 to activate Rac Rho small GTPases. May enhance the guanine nucleotide exchange factor (GEF) activity of DOCK1. This chain is Engulfment and cell motility protein 2 (ELMO2), found in Homo sapiens (Human).